Here is an 891-residue protein sequence, read N- to C-terminus: uncharacterized protein (891 aa).

A compositionally biased stretch (basic and acidic residues) spans 48–64 (GHKKPRSESRKKYDAKK). The interval 48 to 86 (GHKKPRSESRKKYDAKKQHQSSHFATPVKGVESSEPTEK) is disordered. Serine 261, serine 263, serine 265, and serine 268 each carry phosphoserine. The segment at 795 to 822 (QRTFSNESPRAVDSGFSRTSTPFSESTS) is disordered. Over residues 810 to 822 (FSRTSTPFSESTS) the composition is skewed to polar residues.

The protein resides in the nucleus. This is an uncharacterized protein from Schizosaccharomyces pombe (strain 972 / ATCC 24843) (Fission yeast).